A 273-amino-acid polypeptide reads, in one-letter code: Type II restriction enzyme HgiCII (273 aa).

Belongs to the TdeIII type II restriction endonuclease family.

The catalysed reaction is Endonucleolytic cleavage of DNA to give specific double-stranded fragments with terminal 5'-phosphates.. A P subtype restriction enzyme that recognizes the double-stranded sequence 5'-GGWCC-3' and cleaves after G-1. The polypeptide is Type II restriction enzyme HgiCII (Herpetosiphon aurantiacus (Herpetosiphon giganteus)).